A 122-amino-acid polypeptide reads, in one-letter code: Small ribosomal subunit protein uS13 (122 aa).

The segment at 99-122 is disordered; the sequence is RGQRTHTNARTRKGPAKAIAGKKK.

The protein belongs to the universal ribosomal protein uS13 family. Part of the 30S ribosomal subunit. Forms a loose heterodimer with protein S19. Forms two bridges to the 50S subunit in the 70S ribosome.

Located at the top of the head of the 30S subunit, it contacts several helices of the 16S rRNA. In the 70S ribosome it contacts the 23S rRNA (bridge B1a) and protein L5 of the 50S subunit (bridge B1b), connecting the 2 subunits; these bridges are implicated in subunit movement. Contacts the tRNAs in the A and P-sites. The polypeptide is Small ribosomal subunit protein uS13 (Bradyrhizobium diazoefficiens (strain JCM 10833 / BCRC 13528 / IAM 13628 / NBRC 14792 / USDA 110)).